A 207-amino-acid polypeptide reads, in one-letter code: MSTVVATVVFAVAAYLIGSVSFAVVVSRAMGLADPRTYGSGNPGATNVLRSGNKKAAILTLLGDAAKGWLAVWLAQLLAPRYGVEDMGIALVVIAAFLGHLYPVFHRFTGGKGVATAAGILLALSGWLGLATLATWLIIATFFRYSSLAALVSAVFAPFYYVLLFGIDPLAGAIAVMSVLLIARHRANIAKLLAGKESRIGEKKKPT.

Transmembrane regions (helical) follow at residues 4–24 (VVAT…SFAV), 58–78 (ILTL…AQLL), 86–106 (DMGI…PVFH), 120–140 (ILLA…LIIA), and 162–182 (VLLF…VLLI).

Belongs to the PlsY family. Probably interacts with PlsX.

The protein localises to the cell inner membrane. It catalyses the reaction an acyl phosphate + sn-glycerol 3-phosphate = a 1-acyl-sn-glycero-3-phosphate + phosphate. The protein operates within lipid metabolism; phospholipid metabolism. In terms of biological role, catalyzes the transfer of an acyl group from acyl-phosphate (acyl-PO(4)) to glycerol-3-phosphate (G3P) to form lysophosphatidic acid (LPA). This enzyme utilizes acyl-phosphate as fatty acyl donor, but not acyl-CoA or acyl-ACP. This is Glycerol-3-phosphate acyltransferase from Ralstonia nicotianae (strain ATCC BAA-1114 / GMI1000) (Ralstonia solanacearum).